A 209-amino-acid polypeptide reads, in one-letter code: Uracil phosphoribosyltransferase (209 aa).

Residues arginine 79, arginine 104, and 131–139 (DPMLATGGS) each bind 5-phospho-alpha-D-ribose 1-diphosphate. Uracil-binding positions include isoleucine 194 and 199–201 (GDA). Aspartate 200 serves as a coordination point for 5-phospho-alpha-D-ribose 1-diphosphate.

The protein belongs to the UPRTase family. Requires Mg(2+) as cofactor.

It carries out the reaction UMP + diphosphate = 5-phospho-alpha-D-ribose 1-diphosphate + uracil. The protein operates within pyrimidine metabolism; UMP biosynthesis via salvage pathway; UMP from uracil: step 1/1. Allosterically activated by GTP. In terms of biological role, catalyzes the conversion of uracil and 5-phospho-alpha-D-ribose 1-diphosphate (PRPP) to UMP and diphosphate. The polypeptide is Uracil phosphoribosyltransferase (Halalkalibacterium halodurans (strain ATCC BAA-125 / DSM 18197 / FERM 7344 / JCM 9153 / C-125) (Bacillus halodurans)).